Consider the following 130-residue polypeptide: MIGNWNYGTGRRKTSVARVFIKKGSGKIVVNGKPVDEFFARETGRMIVHQPLELTGHLESFDIKVNVHGGGETGQAGAVRHGITRALIDYDAALKPALSQAGFVTRDAREVERKKVGFRKARRRKQFSKR.

The protein belongs to the universal ribosomal protein uS9 family.

The sequence is that of Small ribosomal subunit protein uS9 from Bordetella pertussis (strain Tohama I / ATCC BAA-589 / NCTC 13251).